A 164-amino-acid chain; its full sequence is Cyclic pyranopterin monophosphate synthase (164 aa).

Residues 75–77 (MCH) and 116–117 (ME) each bind substrate. The active site involves Asp-131.

It belongs to the MoaC family. Homohexamer; trimer of dimers.

The enzyme catalyses (8S)-3',8-cyclo-7,8-dihydroguanosine 5'-triphosphate = cyclic pyranopterin phosphate + diphosphate. It participates in cofactor biosynthesis; molybdopterin biosynthesis. Catalyzes the conversion of (8S)-3',8-cyclo-7,8-dihydroguanosine 5'-triphosphate to cyclic pyranopterin monophosphate (cPMP). The protein is Cyclic pyranopterin monophosphate synthase of Staphylococcus aureus (strain MRSA252).